A 161-amino-acid polypeptide reads, in one-letter code: Insulin-like growth factor 1, juvenile form (161 aa).

Residues 45–73 form a b region; sequence GPETLCGAELVDTLQFVCGDRGFYFSKPT. Intrachain disulfides connect Cys-50-Cys-92, Cys-62-Cys-105, and Cys-91-Cys-96. Positions 74–85 are c; that stretch reads GYGPSSRRSHNR. The interval 86 to 106 is a; sequence GIVDECCFQSCELRRLEMYCA. The segment at 107–114 is d; that stretch reads PVKPGKTP. The segment at 111-161 is disordered; sequence GKTPRSVRAQRHTDSPRTAKKPLPGQSHSSYKEVHQKNSSRGNTGGRNYRI. Positions 115–161 are cleaved as a propeptide — e peptide; it reads RSVRAQRHTDSPRTAKKPLPGQSHSSYKEVHQKNSSRGNTGGRNYRI.

The protein belongs to the insulin family.

It is found in the secreted. Functionally, the insulin-like growth factors, isolated from plasma, are structurally and functionally related to insulin but have a much higher growth-promoting activity. Acts as a ligand for IGF1R. Binds to the alpha subunit of IGF1R, leading to the activation of the intrinsic tyrosine kinase activity which autophosphorylates tyrosine residues in the beta subunit thus initiatiating a cascade of down-stream signaling events leading to activation of the PI3K-AKT/PKB and the Ras-MAPK pathways. Binds to integrins. Its binding to integrins and subsequent ternary complex formation with integrins and IGFR1 are essential for IGF1 signaling. This chain is Insulin-like growth factor 1, juvenile form, found in Cyprinus carpio (Common carp).